The chain runs to 209 residues: Probable glutathione peroxidase 8 (209 aa).

Residue Met-1 is modified to N-acetylmethionine. The chain crosses the membrane as a helical span at residues 18–40 (IFAVLLSMVLCTVMLFLLQLKFL). The active site involves Cys-79.

It belongs to the glutathione peroxidase family.

It is found in the membrane. The enzyme catalyses 2 glutathione + H2O2 = glutathione disulfide + 2 H2O. This Mus musculus (Mouse) protein is Probable glutathione peroxidase 8 (Gpx8).